The sequence spans 191 residues: C-type lectin domain family 2 member D (191 aa).

Topologically, residues 1–38 (MHDSNNVEKDITPSELPANPGCLHSKEHSIKATLIWRL) are cytoplasmic. The helical; Signal-anchor for type II membrane protein transmembrane segment at 39–59 (FFLIMFLTIIVCGMVAALSAI) threads the bilayer. The Extracellular portion of the chain corresponds to 60 to 191 (RANCHQEPSV…WICSKSDIHV (132 aa)). A disulfide bond links Cys-75 and Cys-86. Positions 82-185 (FQRKCFYFSD…HYTERKWICS (104 aa)) constitute a C-type lectin domain. N-linked (GlcNAc...) asparagine glycans are attached at residues Asn-95 and Asn-147. Cysteines 103 and 184 form a disulfide.

In terms of assembly, homodimer; disulfide-linked. Post-translationally, N-glycosylated. Detected in peripheral blood leukocytes, osteoblasts, lymph node, thymus and spleen. Isoform 1, isoform 2 and isoform 4 are expressed in T- and B-lymphocytes, and at lower levels in NK cells. They are also expressed in B-cell lines and LPS-matured monocyte-derived dendritic cells.

The protein localises to the cell membrane. It is found in the endoplasmic reticulum. In terms of biological role, receptor for KLRB1 that protects target cells against natural killer cell-mediated lysis. Inhibits osteoclast formation. Inhibits bone resorption. Modulates the release of interferon-gamma. Binds high molecular weight sulfated glycosaminoglycans. The protein is C-type lectin domain family 2 member D (CLEC2D) of Homo sapiens (Human).